The primary structure comprises 1330 residues: Ubinuclein-2 (1330 aa).

The segment at 1–133 (MAEPRRVAFI…PRETVRLELV (133 aa)) is disordered. A Phosphoserine modification is found at Ser13. Basic and acidic residues-rich tracts occupy residues 16–37 (RRRE…EPPR) and 67–79 (PREK…EVSR). The span at 93–111 (PEPPPPPLPQLHLQPPPPR) shows a compositional bias: pro residues. Over residues 123-133 (PPRETVRLELV) the composition is skewed to basic and acidic residues. Residue Thr244 is modified to Phosphothreonine. Positions 249–304 (QASDTEEDDTTDNQKHKPPKIPKIKEDDIEMKKRKRKEEGEKEKKPRKKVPKQLGV) are disordered. Ser251 is subject to Phosphoserine. At Thr253 the chain carries Phosphothreonine. Lys273 participates in a covalent cross-link: Glycyl lysine isopeptide (Lys-Gly) (interchain with G-Cter in SUMO2). Phosphoserine is present on Ser312. Residues 336–356 (KDALKKESNPKTPLNFSTSSL) are disordered. The segment covering 345–356 (PKTPLNFSTSSL) has biased composition (polar residues). Residues Ser417, Ser420, Ser423, and Ser585 each carry the phosphoserine modification. 7 disordered regions span residues 574–597 (FQTD…GKRV), 672–730 (LTSA…STPV), 802–833 (PKKL…DLAH), 864–913 (GLQR…VTKV), 938–988 (PVVK…SRTV), 1017–1201 (MAAS…GSSV), and 1308–1330 (HVQQ…RKSQ). Composition is skewed to basic and acidic residues over residues 575–585 (QTDEEREKNGS) and 688–699 (KVKECSPKKDQK). Positions 701–730 (PASSVASVGGPSTSSSTSAVASTSSGSTPV) are enriched in low complexity. Polar residues predominate over residues 807-816 (STQTAHSSSL). Residues 864-895 (GLQRSSQIHASSSSQTHVSSSSQAQVAASSHT) show a composition bias toward low complexity. Composition is skewed to polar residues over residues 896 to 913 (LGTS…VTKV) and 938 to 956 (PVVK…PLTK). A compositionally biased stretch (low complexity) spans 1017–1029 (MAASPKLASSPKP). Residues 1030 to 1044 (ATSPKPLPSPKPSAS) show a composition bias toward pro residues. Low complexity-rich tracts occupy residues 1045–1054 (PKPSQSAKPS) and 1061–1079 (SKSN…SSPN). The residue at position 1052 (Lys1052) is an N6-acetyllysine. 3 stretches are compositionally biased toward polar residues: residues 1082–1148 (VAQS…NSLS), 1158–1169 (RGSNLNSSGANR), and 1308–1317 (HVQQTFNDGG). Ser1107 carries the phosphoserine modification. The residue at position 1132 (Lys1132) is an N6-acetyllysine. Basic and acidic residues predominate over residues 1321-1330 (GDTKLPRKSQ).

This sequence belongs to the ubinuclein family.

This chain is Ubinuclein-2 (UBN2), found in Bos taurus (Bovine).